We begin with the raw amino-acid sequence, 486 residues long: Glutamate--tRNA ligase (486 aa).

Residues 12 to 22 (PSPTGTPHVGL) carry the 'HIGH' region motif. The short motif at 256 to 260 (KLSKR) is the 'KMSKS' region element. An ATP-binding site is contributed by Lys259.

It belongs to the class-I aminoacyl-tRNA synthetase family. Glutamate--tRNA ligase type 1 subfamily. Monomer.

Its subcellular location is the cytoplasm. It carries out the reaction tRNA(Glu) + L-glutamate + ATP = L-glutamyl-tRNA(Glu) + AMP + diphosphate. In terms of biological role, catalyzes the attachment of glutamate to tRNA(Glu) in a two-step reaction: glutamate is first activated by ATP to form Glu-AMP and then transferred to the acceptor end of tRNA(Glu). The sequence is that of Glutamate--tRNA ligase from Mycolicibacterium smegmatis (strain ATCC 700084 / mc(2)155) (Mycobacterium smegmatis).